A 93-amino-acid polypeptide reads, in one-letter code: DNA-directed RNA polymerase subunit Rpo11 (93 aa).

This sequence belongs to the archaeal Rpo11/eukaryotic RPB11/RPC19 RNA polymerase subunit family. In terms of assembly, part of the RNA polymerase complex.

It is found in the cytoplasm. It catalyses the reaction RNA(n) + a ribonucleoside 5'-triphosphate = RNA(n+1) + diphosphate. In terms of biological role, DNA-dependent RNA polymerase (RNAP) catalyzes the transcription of DNA into RNA using the four ribonucleoside triphosphates as substrates. The protein is DNA-directed RNA polymerase subunit Rpo11 of Methanocella arvoryzae (strain DSM 22066 / NBRC 105507 / MRE50).